We begin with the raw amino-acid sequence, 416 residues long: Multifunctional CCA protein (416 aa).

2 residues coordinate ATP: Gly-8 and Arg-11. Gly-8 and Arg-11 together coordinate CTP. Residues Asp-21 and Asp-23 each contribute to the Mg(2+) site. Residues Arg-91, Arg-137, and Arg-140 each contribute to the ATP site. CTP is bound by residues Arg-91, Arg-137, and Arg-140. The 102-residue stretch at 228 to 329 (TGLHTMMVLA…IKLFDKADFW (102 aa)) folds into the HD domain.

This sequence belongs to the tRNA nucleotidyltransferase/poly(A) polymerase family. Bacterial CCA-adding enzyme type 1 subfamily. As to quaternary structure, monomer. Can also form homodimers and oligomers. The cofactor is Mg(2+). It depends on Ni(2+) as a cofactor.

The enzyme catalyses a tRNA precursor + 2 CTP + ATP = a tRNA with a 3' CCA end + 3 diphosphate. It carries out the reaction a tRNA with a 3' CCA end + 2 CTP + ATP = a tRNA with a 3' CCACCA end + 3 diphosphate. Its function is as follows. Catalyzes the addition and repair of the essential 3'-terminal CCA sequence in tRNAs without using a nucleic acid template. Adds these three nucleotides in the order of C, C, and A to the tRNA nucleotide-73, using CTP and ATP as substrates and producing inorganic pyrophosphate. tRNA 3'-terminal CCA addition is required both for tRNA processing and repair. Also involved in tRNA surveillance by mediating tandem CCA addition to generate a CCACCA at the 3' terminus of unstable tRNAs. While stable tRNAs receive only 3'-terminal CCA, unstable tRNAs are marked with CCACCA and rapidly degraded. This is Multifunctional CCA protein from Shewanella sp. (strain MR-4).